A 499-amino-acid chain; its full sequence is Glutathione reductase, cytosolic (499 aa).

FAD is bound by residues Ser-35, Gly-36, Glu-55, Thr-72, Cys-73, and Lys-81. Residue Ser-35 participates in glutathione binding. Residues Cys-73 and Cys-78 are joined by a disulfide bond. Tyr-130 provides a ligand contact to glutathione. Gly-146 provides a ligand contact to FAD. 6 residues coordinate NADP(+): Gly-211, Ile-214, Glu-217, Arg-234, Arg-240, and Gly-297. Asp-338 and Thr-346 together coordinate FAD. Ala-376 provides a ligand contact to NADP(+). His-472 is an FAD binding site. His-472 (proton acceptor) is an active-site residue.

The protein belongs to the class-I pyridine nucleotide-disulfide oxidoreductase family. In terms of assembly, homodimer. Requires FAD as cofactor.

It localises to the cytoplasm. The enzyme catalyses 2 glutathione + NADP(+) = glutathione disulfide + NADPH + H(+). Catalyzes the reduction of glutathione disulfide (GSSG) to reduced glutathione (GSH). Constitutes the major mechanism to maintain a high GSH:GSSG ratio in the cytosol. The protein is Glutathione reductase, cytosolic of Arabidopsis thaliana (Mouse-ear cress).